Reading from the N-terminus, the 211-residue chain is Molybdenum cofactor guanylyltransferase (211 aa).

GTP-binding positions include 12-14 (LAG), Lys-25, Asn-53, Asp-71, and Asp-101. Mg(2+) is bound at residue Asp-101.

It belongs to the MobA family. In terms of assembly, monomer. Mg(2+) is required as a cofactor.

It is found in the cytoplasm. It catalyses the reaction Mo-molybdopterin + GTP + H(+) = Mo-molybdopterin guanine dinucleotide + diphosphate. Transfers a GMP moiety from GTP to Mo-molybdopterin (Mo-MPT) cofactor (Moco or molybdenum cofactor) to form Mo-molybdopterin guanine dinucleotide (Mo-MGD) cofactor. The chain is Molybdenum cofactor guanylyltransferase from Acidovorax ebreus (strain TPSY) (Diaphorobacter sp. (strain TPSY)).